Here is a 594-residue protein sequence, read N- to C-terminus: UvrABC system protein C (594 aa).

The 78-residue stretch at aspartate 14 to isoleucine 91 folds into the GIY-YIG domain. A UVR domain is found at aspartate 196–methionine 231.

Belongs to the UvrC family. As to quaternary structure, interacts with UvrB in an incision complex.

Its subcellular location is the cytoplasm. Its function is as follows. The UvrABC repair system catalyzes the recognition and processing of DNA lesions. UvrC both incises the 5' and 3' sides of the lesion. The N-terminal half is responsible for the 3' incision and the C-terminal half is responsible for the 5' incision. This chain is UvrABC system protein C, found in Streptococcus equi subsp. zooepidemicus (strain MGCS10565).